The chain runs to 701 residues: Acetyl-coenzyme A synthetase, cytoplasmic (701 aa).

The tract at residues 1–41 is disordered; it reads MGLPEERVRSGSGSRGQEEAGAGGRARSWSPPPEVSRSAHV. The tract at residues 1-107 is interaction with TFEB; that stretch reads MGLPEERVRS…GATTNICYNV (107 aa). Residues Ser28, Ser30, and Ser36 each carry the phosphoserine modification. Position 219–222 (219–222) interacts with CoA; that stretch reads RGEK. 3 positions are modified to phosphoserine: Ser263, Ser265, and Ser267. Thr363 provides a ligand contact to CoA. The residue at position 418 (Lys418) is an N6-acetyllysine. Residues 439–441, 463–468, Asp552, and Arg567 contribute to the ATP site; these read GEP and DTFWQT. The CoA site is built by Ser575 and Arg636. A Nuclear localization signal motif is present at residues 656–668; that stretch reads KTRSGKIMRRVLR. Phosphoserine; by AMPK is present on Ser659. Lys661 is modified (N6-acetyllysine).

Belongs to the ATP-dependent AMP-binding enzyme family. Monomer. Interacts with TFEB. AMPK-mediated phosphorylated form at Ser-659 interacts with KPNA1; this interaction results in nuclear translocation of ACSS2. Interacts with the 'Thr-172' phosphorylated form of PRKAA2. Interacts with CREBBP. In terms of processing, reversibly acetylated at Lys-661. The acetyl-CoA synthase activity is inhibited by acetylation and activated by deacetylation mediated by the deacetylases SIRT1 and SIRT3. Post-translationally, glucose deprivation results in its AMPK-dependent phosphorylation at Ser-659, which leads to exposure of its nuclear localization signal, required for its interaction with KPNA1 and subsequent translocation to the nucleus.

It localises to the cytoplasm. The protein resides in the cytosol. The protein localises to the nucleus. It carries out the reaction acetate + ATP + CoA = acetyl-CoA + AMP + diphosphate. The enzyme catalyses propanoate + ATP + CoA = propanoyl-CoA + AMP + diphosphate. Its activity is regulated as follows. Inhibited by acetylation at Lys-661 and activated by deacetylation mediated by the deacetylases SIRT1 and SIRT3. Catalyzes the synthesis of acetyl-CoA from short-chain fatty acids. Acetate is the preferred substrate. Can also utilize propionate with a much lower affinity. Nuclear ACSS2 promotes glucose deprivation-induced lysosomal biogenesis and autophagy, tumor cell survival and brain tumorigenesis. Glucose deprivation results in AMPK-mediated phosphorylation of ACSS2 leading to its translocation to the nucleus where it binds to TFEB and locally produces acetyl-CoA for histone acetylation in the promoter regions of TFEB target genes thereby activating their transcription. The regulation of genes associated with autophagy and lysosomal activity through ACSS2 is important for brain tumorigenesis and tumor survival. Acts as a chromatin-bound transcriptional coactivator that up-regulates histone acetylation and expression of neuronal genes. Can be recruited to the loci of memory-related neuronal genes to maintain a local acetyl-CoA pool, providing the substrate for histone acetylation and promoting the expression of specific genes, which is essential for maintaining long-term spatial memory. The sequence is that of Acetyl-coenzyme A synthetase, cytoplasmic (ACSS2) from Homo sapiens (Human).